The following is a 526-amino-acid chain: DNA polymerase epsilon subunit B (526 aa).

It belongs to the DNA polymerase epsilon subunit B family. Subunit of the DNA polymerase II. Interacts with POL2A (via C-terminus).

The protein localises to the nucleus. In terms of biological role, as accessory component of DNA polymerase II participates in chromosomal DNA replication. Required for the timing and determination of cell fate during plant embryogenesis and root pole development, by promoting cell cycle and cell type patterning. Necessary for proper shoot (SAM) and root apical meristem (RAM) functions. Is essential to promote the first divisions of the zygote. In Arabidopsis thaliana (Mouse-ear cress), this protein is DNA polymerase epsilon subunit B.